We begin with the raw amino-acid sequence, 252 residues long: D-aminoacyl-tRNA deacylase (252 aa).

This sequence belongs to the DtdA deacylase family. In terms of assembly, monomer. Zn(2+) serves as cofactor.

It carries out the reaction a D-aminoacyl-tRNA + H2O = a tRNA + a D-alpha-amino acid + H(+). The catalysed reaction is glycyl-tRNA(Ala) + H2O = tRNA(Ala) + glycine + H(+). D-aminoacyl-tRNA deacylase with broad substrate specificity. By recycling D-aminoacyl-tRNA to D-amino acids and free tRNA molecules, this enzyme counteracts the toxicity associated with the formation of D-aminoacyl-tRNA entities in vivo. The polypeptide is D-aminoacyl-tRNA deacylase (Pyrobaculum arsenaticum (strain DSM 13514 / JCM 11321 / PZ6)).